Here is a 950-residue protein sequence, read N- to C-terminus: Protocadherin alpha-6 (950 aa).

The first 29 residues, 1 to 29, serve as a signal peptide directing secretion; sequence MVFTPEDRLGKQCLLLPLLLLAAWKVGSG. Topologically, residues 30–697 are extracellular; the sequence is QLHYSVPEEA…GPEAALVDVN (668 aa). 6 Cadherin domains span residues 34-133, 157-242, 243-350, 351-455, 456-565, and 581-678; these read SVPE…PPLF, ASDA…APTF, EQSE…VPEI, ALTS…APAF, AQPE…APAL, and VPRS…APKA. 4 N-linked (GlcNAc...) asparagine glycosylation sites follow: asparagine 257, asparagine 265, asparagine 386, and asparagine 548. The helical transmembrane segment at 698 to 718 threads the bilayer; sequence VYLIIAICAVSSLLVLTLLLY. Over 719 to 950 the chain is Cytoplasmic; the sequence is TALRCSAPPT…GNSTTDNSDQ (232 aa). 4 PXXP repeats span residues 799-802, 832-835, 873-876, and 891-894; these read PRQP, PGGP, PGNP, and PGSP. The 4 X 4 AA repeats of P-X-X-P stretch occupies residues 799–894; the sequence is PRQPNPDWRY…PDKFIIPGSP (96 aa). A disordered region spans residues 830–950; sequence AGPGGPDQQW…GNSTTDNSDQ (121 aa). The segment covering 909–923 has biased composition (basic and acidic residues); that stretch reads DKSDFITFGKKEETK.

The protein localises to the cell membrane. It is found in the secreted. Potential calcium-dependent cell-adhesion protein. May be involved in the establishment and maintenance of specific neuronal connections in the brain. The polypeptide is Protocadherin alpha-6 (PCDHA6) (Homo sapiens (Human)).